Consider the following 78-residue polypeptide: Acyl carrier protein (78 aa).

The Carrier domain maps to 2 to 77 (SDILERVRKI…DAVKFITEKT (76 aa)). Ser37 bears the O-(pantetheine 4'-phosphoryl)serine mark.

Belongs to the acyl carrier protein (ACP) family. In terms of processing, 4'-phosphopantetheine is transferred from CoA to a specific serine of apo-ACP by AcpS. This modification is essential for activity because fatty acids are bound in thioester linkage to the sulfhydryl of the prosthetic group.

The protein resides in the cytoplasm. The protein operates within lipid metabolism; fatty acid biosynthesis. In terms of biological role, carrier of the growing fatty acid chain in fatty acid biosynthesis. The sequence is that of Acyl carrier protein from Caulobacter vibrioides (strain ATCC 19089 / CIP 103742 / CB 15) (Caulobacter crescentus).